Consider the following 351-residue polypeptide: Ceramide hydroxylase (351 aa).

Transmembrane regions (helical) follow at residues 26-46 (AAIY…GFLI), 47-67 (AATT…MLAL), 141-161 (GFLF…AILI), and 204-224 (VACW…VVPV).

Belongs to the fatty acid desaturase type 1 family.

The protein localises to the cell inner membrane. It functions in the pathway lipid metabolism; sphingolipid metabolism. Functionally, involved in de novo bacterial ceramide synthesis. The sequence is that of Ceramide hydroxylase from Caulobacter vibrioides (strain NA1000 / CB15N) (Caulobacter crescentus).